The sequence spans 441 residues: ATP-dependent protease ATPase subunit HslU (441 aa).

Residues Ile-17, 60–65 (GVGKTE), Asp-253, Glu-319, and Arg-391 each bind ATP.

The protein belongs to the ClpX chaperone family. HslU subfamily. A double ring-shaped homohexamer of HslV is capped on each side by a ring-shaped HslU homohexamer. The assembly of the HslU/HslV complex is dependent on binding of ATP.

The protein localises to the cytoplasm. ATPase subunit of a proteasome-like degradation complex; this subunit has chaperone activity. The binding of ATP and its subsequent hydrolysis by HslU are essential for unfolding of protein substrates subsequently hydrolyzed by HslV. HslU recognizes the N-terminal part of its protein substrates and unfolds these before they are guided to HslV for hydrolysis. In Legionella pneumophila (strain Paris), this protein is ATP-dependent protease ATPase subunit HslU.